Consider the following 590-residue polypeptide: RNA-binding protein 47 (590 aa).

Residues M1–K21 show a composition bias toward polar residues. Residues M1 to V26 are disordered. 3 RRM domains span residues C71–D149, C151–P233, and K246–P318. Asymmetric dimethylarginine; alternate is present on residues R396 and R407. Residues R396 and R407 each carry the omega-N-methylarginine; alternate modification.

This sequence belongs to the RRM RBM47 family. Homodimer. Interacts with A1CF. Interacts with APOBEC1; form an mRNA editing complex. Interacts with RBPMS.

It localises to the nucleus. It is found in the cytoplasm. In terms of biological role, single-stranded RNA-binding protein that functions in a variety of RNA processes, including alternative splicing, RNA stabilization, and RNA editing. Functions as an enzyme-substrate adapter for the cytidine deaminase APOBEC1. With APOBEC1 forms an mRNA editing complex involved into cytidine to uridine editing of a variety of mRNA molecules. Through the binding of their 3'UTR, also stabilizes a variety of mRNAs and regulates the expression of genes such as the interferon alpha/beta receptor and interleukin-10. Also involved in the alternative splicing of several genes including TJP1. Binds the pre-mRNA (U)GCAUG consensus sequences in downstream intronic regions of alternative exons regulating their exclusion and inclusion into mRNAs. Independently of its RNA-binding activity, could negatively regulate MAVS by promoting its lysosomal degradation. The protein is RNA-binding protein 47 of Rattus norvegicus (Rat).